The chain runs to 210 residues: NAD(P)H-quinone oxidoreductase subunit I (210 aa).

4Fe-4S ferredoxin-type domains are found at residues 54–83 (GRIHFEFDKCIACEICVRVCPIDLPVVDWA) and 94–123 (YSYSIDFGVCIFCANCVEFCPTNCLSVTED). [4Fe-4S] cluster is bound by residues Cys63, Cys66, Cys69, Cys73, Cys103, Cys106, Cys109, and Cys113.

It belongs to the complex I 23 kDa subunit family. NDH-1 is composed of at least 11 different subunits. It depends on [4Fe-4S] cluster as a cofactor.

The protein localises to the cellular thylakoid membrane. It carries out the reaction a plastoquinone + NADH + (n+1) H(+)(in) = a plastoquinol + NAD(+) + n H(+)(out). The enzyme catalyses a plastoquinone + NADPH + (n+1) H(+)(in) = a plastoquinol + NADP(+) + n H(+)(out). NDH-1 shuttles electrons from an unknown electron donor, via FMN and iron-sulfur (Fe-S) centers, to quinones in the respiratory and/or the photosynthetic chain. The immediate electron acceptor for the enzyme in this species is believed to be plastoquinone. Couples the redox reaction to proton translocation, and thus conserves the redox energy in a proton gradient. The sequence is that of NAD(P)H-quinone oxidoreductase subunit I from Synechococcus sp. (strain JA-2-3B'a(2-13)) (Cyanobacteria bacterium Yellowstone B-Prime).